The sequence spans 160 residues: Transcription antitermination protein NusB (160 aa).

Belongs to the NusB family.

In terms of biological role, involved in transcription antitermination. Required for transcription of ribosomal RNA (rRNA) genes. Binds specifically to the boxA antiterminator sequence of the ribosomal RNA (rrn) operons. The polypeptide is Transcription antitermination protein NusB (Nitrobacter hamburgensis (strain DSM 10229 / NCIMB 13809 / X14)).